A 55-amino-acid polypeptide reads, in one-letter code: Large ribosomal subunit protein bL33 (55 aa).

Basic and acidic residues predominate over residues 1-11 (MAKGGREKIKL). Residues 1-27 (MAKGGREKIKLESTAGTGHFYTTSKNK) form a disordered region. Over residues 14–24 (TAGTGHFYTTS) the composition is skewed to polar residues.

The protein belongs to the bacterial ribosomal protein bL33 family.

The sequence is that of Large ribosomal subunit protein bL33 from Dechloromonas aromatica (strain RCB).